The chain runs to 406 residues: 5-hydroxytryptamine receptor 4 (406 aa).

At 1–19 (MDRLDANVSSNEGFGSVEK) the chain is on the extracellular side. A glycan (N-linked (GlcNAc...) asparagine) is linked at asparagine 7. The helical transmembrane segment at 20 to 44 (VVLLTFFAMVILMAILGNLLVMVAV) threads the bilayer. Over 45-54 (CRDRQLRKIK) the chain is Cytoplasmic. Residues 55–78 (TNYFIVSLAFADLLVSVLVNAFGA) traverse the membrane as a helical segment. The Extracellular portion of the chain corresponds to 79 to 92 (IELVQDIWFYGEMF). Residues 93–117 (CLVRTSLDVLLTTASIFHLCCISLD) traverse the membrane as a helical segment. Cysteine 93 and cysteine 184 are disulfide-bonded. Aspartate 100 is a serotonin binding site. The Cytoplasmic segment spans residues 118–133 (RYYAICCQPLVYRNKM). Residues 134-157 (TPLRIALMLGGCWVIPMFISFLPI) form a helical membrane-spanning segment. Residues 158 to 188 (MQGWNNIGIVDVIEKRKFNHNSNSTFCVFMV) are Extracellular-facing. Residues 189–212 (NKPYAITCSVVAFYIPFLLMVLAY) form a helical membrane-spanning segment. Over 213–257 (YRIYVTAKEHAQQIQMLQRAGATSESRPQTADQHSTHRMRTETKA) the chain is Cytoplasmic. The chain crosses the membrane as a helical span at residues 258-283 (AKTLCVIMGCFCFCWAPFFVTNIVDP). Asparagine 279 is a binding site for serotonin. Topologically, residues 284–290 (FIDYTVP) are extracellular. The helical transmembrane segment at 291-314 (EKVWTAFLWLGYINSGLNPFLYAF) threads the bilayer. The Cytoplasmic segment spans residues 315 to 406 (LNKSFRRAFL…DSCSLKRSQS (92 aa)).

The protein belongs to the G-protein coupled receptor 1 family. Interacts (via C-terminus 330-346 AA) with GRK5; this interaction is promoted by 5-HT (serotonin). As to expression, in brain, isoform 5-HT4S is restricted to the striatum. In peripheral tissues, differential expression is also observed in the atrium of the heart where only isoform 5-HT4S is detectable. In terms of tissue distribution, in brain, isoform 5-HT4L is expressed throughout the brain, except in the cerebellum.

The protein localises to the cell membrane. It is found in the endosome membrane. In terms of biological role, G-protein coupled receptor for 5-hydroxytryptamine (serotonin), a biogenic hormone that functions as a neurotransmitter, a hormone and a mitogen. Ligand binding causes a conformation change that triggers signaling via guanine nucleotide-binding proteins (G proteins) and modulates the activity of downstream effectors. HTR4 is coupled to G(s) G alpha proteins and mediates activation of adenylate cyclase activity. The protein is 5-hydroxytryptamine receptor 4 (Htr4) of Rattus norvegicus (Rat).